A 396-amino-acid polypeptide reads, in one-letter code: Probable protein phosphatase 2C 25 (396 aa).

Residues 32–98 form a disordered region; it reads ESLSLTLSHR…SPPGGVLKRK (67 aa). Low complexity predominate over residues 44 to 61; it reads QTSSPSSPSTTVSSPKSP. Residues 139–392 form the PPM-type phosphatase domain; sequence GYSVYCKRGR…DDISVMLIPL (254 aa). Residues aspartate 175, glycine 176, aspartate 338, and aspartate 383 each coordinate Mn(2+).

It belongs to the PP2C family. As to quaternary structure, interacts with MPK4 and MPK6. Mg(2+) serves as cofactor. Requires Mn(2+) as cofactor.

It is found in the cytoplasm. The protein resides in the nucleus. It carries out the reaction O-phospho-L-seryl-[protein] + H2O = L-seryl-[protein] + phosphate. The catalysed reaction is O-phospho-L-threonyl-[protein] + H2O = L-threonyl-[protein] + phosphate. Functionally, protein phosphatase that negatively regulates defense respones. Inactivates MPK4 and MPK6 MAP kinases involved in stress and defense signaling. The protein is Probable protein phosphatase 2C 25 of Arabidopsis thaliana (Mouse-ear cress).